Here is a 380-residue protein sequence, read N- to C-terminus: MAPNLRKSHPLLKMINNSLIDLPTPSNISAWWNFGSLLGICLATQILTGLLLAAHYTADTTLAFSSVAHTCRNVQHGWLIRNLHANGASFFFICIYLHIGRGLYYGSYLYKETWNTGVILLLTLMATAFVGYVLPWGQMSFWGATVITNLFSAVPYIGQTLVEWAWGGFSVDNPTLTRFFTLHFLLPFMIMGLTLIHLTFLHESGSNNPLGIVSNCDKIPFHPYFSLKDILGFMLMLLPLMTLALFSPNLLGDPENFTPANPLVTPPHIKPEWYFLFAYAVLRSIPNKLGGVLALAASVLILFLAPLLHKSKQRTMTFRPFSQLLFWTLTANVLILTWVGSQPVERPFIIIGQLASLTYFTILLILFPIIGALENKMLNY.

A run of 4 helical transmembrane segments spans residues 34–54 (FGSL…LLAA), 78–99 (WLIR…YLHI), 114–134 (WNTG…GYVL), and 179–199 (FFTL…IHLT). Heme b is bound by residues histidine 84 and histidine 98. Histidine 183 and histidine 197 together coordinate heme b. Residue histidine 202 coordinates a ubiquinone. Transmembrane regions (helical) follow at residues 227–247 (LKDI…ALFS), 289–309 (LGGV…PLLH), 321–341 (FSQL…WVGS), and 348–368 (FIII…ILFP).

Belongs to the cytochrome b family. As to quaternary structure, the cytochrome bc1 complex contains 11 subunits: 3 respiratory subunits (MT-CYB, CYC1 and UQCRFS1), 2 core proteins (UQCRC1 and UQCRC2) and 6 low-molecular weight proteins (UQCRH/QCR6, UQCRB/QCR7, UQCRQ/QCR8, UQCR10/QCR9, UQCR11/QCR10 and a cleavage product of UQCRFS1). This cytochrome bc1 complex then forms a dimer. Heme b serves as cofactor.

It localises to the mitochondrion inner membrane. In terms of biological role, component of the ubiquinol-cytochrome c reductase complex (complex III or cytochrome b-c1 complex) that is part of the mitochondrial respiratory chain. The b-c1 complex mediates electron transfer from ubiquinol to cytochrome c. Contributes to the generation of a proton gradient across the mitochondrial membrane that is then used for ATP synthesis. The protein is Cytochrome b (MT-CYB) of Bugeranus carunculatus (Wattled crane).